Consider the following 88-residue polypeptide: MPNIKSQIKRVKTNEKSRQRNKAVKSALRTYVRNFRRAAEAGDVEAATKAARVANRQLDKAASKGVIHKNQAANRKSAISKKLNSLAA.

Disordered regions lie at residues 1–25 (MPNI…KAVK) and 68–88 (HKNQ…SLAA).

This sequence belongs to the bacterial ribosomal protein bS20 family.

Its function is as follows. Binds directly to 16S ribosomal RNA. In Cutibacterium acnes (strain DSM 16379 / KPA171202) (Propionibacterium acnes), this protein is Small ribosomal subunit protein bS20.